The sequence spans 317 residues: Putative ribosomal protein uL10-like (317 aa).

Y24 carries the phosphotyrosine modification. Residue T59 is modified to Phosphothreonine. A disordered region spans residues 292–317 (AAAPAKVEAKEESEESDEDMGFGLFD). A Glycyl lysine isopeptide (Lys-Gly) (interchain with G-Cter in SUMO1); alternate cross-link involves residue K297. K297 is covalently cross-linked (Glycyl lysine isopeptide (Lys-Gly) (interchain with G-Cter in SUMO2); alternate). Over residues 302–311 (EESEESDEDM) the composition is skewed to acidic residues. Residues S304 and S307 each carry the phosphoserine modification.

The protein belongs to the universal ribosomal protein uL10 family. P0 forms a pentameric complex by interaction with dimers of P1 and P2.

Its function is as follows. Ribosomal protein P0 is the functional equivalent of E.coli protein L10. The chain is Putative ribosomal protein uL10-like (RPLP0P6) from Homo sapiens (Human).